The primary structure comprises 318 residues: Mediator of RNA polymerase II transcription subunit 3 (318 aa).

The span at 134–156 shows a compositional bias: polar residues; it reads SAAGITKTSSGNDGNTTGSTANT. The tract at residues 134–225 is disordered; sequence SAAGITKTSS…PSLKQIPNTQ (92 aa). The span at 192 to 217 shows a compositional bias: low complexity; the sequence is HTGPATAPTTSNSAASAAAAAANTPS.

Belongs to the Mediator complex subunit 3 family. As to quaternary structure, component of the Mediator complex.

Its subcellular location is the nucleus. Functionally, component of the Mediator complex, a coactivator involved in regulated gene transcription of nearly all RNA polymerase II-dependent genes. Mediator functions as a bridge to convey information from gene-specific regulatory proteins to the basal RNA polymerase II transcription machinery. Mediator is recruited to promoters by direct interactions with regulatory proteins and serves as a scaffold for the assembly of a functional preinitiation complex with RNA polymerase II and the general transcription factors. The chain is Mediator of RNA polymerase II transcription subunit 3 (PGD1) from Kluyveromyces lactis (strain ATCC 8585 / CBS 2359 / DSM 70799 / NBRC 1267 / NRRL Y-1140 / WM37) (Yeast).